A 271-amino-acid polypeptide reads, in one-letter code: S-adenosylmethionine decarboxylase proenzyme (271 aa).

Residue serine 121 is the Schiff-base intermediate with substrate; via pyruvic acid of the active site. Pyruvic acid (Ser); by autocatalysis is present on serine 121. Histidine 126 serves as the catalytic Proton acceptor; for processing activity. Catalysis depends on cysteine 149, which acts as the Proton donor; for catalytic activity.

This sequence belongs to the prokaryotic AdoMetDC family. Type 2 subfamily. Heterooctamer of four alpha and four beta chains arranged as a tetramer of alpha/beta heterodimers. It depends on pyruvate as a cofactor. In terms of processing, is synthesized initially as an inactive proenzyme. Formation of the active enzyme involves a self-maturation process in which the active site pyruvoyl group is generated from an internal serine residue via an autocatalytic post-translational modification. Two non-identical subunits are generated from the proenzyme in this reaction, and the pyruvate is formed at the N-terminus of the alpha chain, which is derived from the carboxyl end of the proenzyme. The post-translation cleavage follows an unusual pathway, termed non-hydrolytic serinolysis, in which the side chain hydroxyl group of the serine supplies its oxygen atom to form the C-terminus of the beta chain, while the remainder of the serine residue undergoes an oxidative deamination to produce ammonia and the pyruvoyl group blocking the N-terminus of the alpha chain.

The catalysed reaction is S-adenosyl-L-methionine + H(+) = S-adenosyl 3-(methylsulfanyl)propylamine + CO2. The protein operates within amine and polyamine biosynthesis; S-adenosylmethioninamine biosynthesis; S-adenosylmethioninamine from S-adenosyl-L-methionine: step 1/1. Its function is as follows. Catalyzes the decarboxylation of S-adenosylmethionine to S-adenosylmethioninamine (dcAdoMet), the propylamine donor required for the synthesis of the polyamines spermine and spermidine from the diamine putrescine. In Clostridium perfringens (strain ATCC 13124 / DSM 756 / JCM 1290 / NCIMB 6125 / NCTC 8237 / Type A), this protein is S-adenosylmethionine decarboxylase proenzyme.